A 376-amino-acid chain; its full sequence is Serpin B9 (376 aa).

An N-acetylmethionine modification is found at M1.

Belongs to the serpin family. Ov-serpin subfamily.

The protein localises to the cytoplasm. Its function is as follows. Granzyme B inhibitor. The protein is Serpin B9 (SERPINB9) of Homo sapiens (Human).